The primary structure comprises 276 residues: WIMGHMVNGIDQIDEFLRLGSNSPEFDINFDKDAKPVYTYHGVPCDCFRSCLRWEYIGDYLTALREVTTPGNPKFRENLSLFVFDLKTNSLYDSQAGKAGENLADDIFKYYWNEGNNGGRAYMIISIPDIEHYDLMTSFKHYFISNGHEELLDFVGFDFSANDNIPDVEKVFEKVRVPGVPDRVWQSDGITNCIMRGLNRVKEAVKVRDAGGIINKVYVWTVDKVPSIKAALDAGVDGVMTNHPDVVVGVLREDGYKDKFRYASYNDNPWETFKAE.

Residue His-5 is part of the active site. Positions 25 and 27 each coordinate Mg(2+). Residue His-41 is the Nucleophile of the active site. Intrachain disulfides connect Cys-45–Cys-51 and Cys-47–Cys-193. Asp-85 lines the Mg(2+) pocket.

It belongs to the arthropod phospholipase D family. Class II subfamily. The cofactor is Mg(2+). In terms of tissue distribution, expressed by the venom gland.

It is found in the secreted. The catalysed reaction is an N-(acyl)-sphingosylphosphocholine = an N-(acyl)-sphingosyl-1,3-cyclic phosphate + choline. It catalyses the reaction an N-(acyl)-sphingosylphosphoethanolamine = an N-(acyl)-sphingosyl-1,3-cyclic phosphate + ethanolamine. The enzyme catalyses a 1-acyl-sn-glycero-3-phosphocholine = a 1-acyl-sn-glycero-2,3-cyclic phosphate + choline. It carries out the reaction a 1-acyl-sn-glycero-3-phosphoethanolamine = a 1-acyl-sn-glycero-2,3-cyclic phosphate + ethanolamine. Dermonecrotic toxins cleave the phosphodiester linkage between the phosphate and headgroup of certain phospholipids (sphingolipid and lysolipid substrates), forming an alcohol (often choline) and a cyclic phosphate. This toxin acts on sphingomyelin (SM). It may also act on ceramide phosphoethanolamine (CPE), lysophosphatidylcholine (LPC) and lysophosphatidylethanolamine (LPE), but not on lysophosphatidylserine (LPS), and lysophosphatidylglycerol (LPG). It acts by transphosphatidylation, releasing exclusively cyclic phosphate products as second products. Induces dermonecrosis, hemolysis, increased vascular permeability, edema, inflammatory response, and platelet aggregation. This is Dermonecrotic toxin LvSicTox-alphaII1 from Loxosceles variegata (Recluse spider).